Consider the following 323-residue polypeptide: Oligodendrocyte transcription factor 2 (323 aa).

Polar residues-rich tracts occupy residues 1 to 13 and 27 to 45; these read MDSD…SRPS and KGSS…STPS. The tract at residues 1–107 is disordered; the sequence is MDSDASLVSS…KKQMTEPELQ (107 aa). Residues 76 to 93 are compositionally biased toward low complexity; that stretch reads KSSSSSTSSSTSSAAASS. A bHLH domain is found at 108–162; it reads QLRLKINSRERKRMHDLNIAMDGLREVMPYAHGPSVRKLSKIATLLLARNYILML.

As to quaternary structure, interacts with NKX2-2. Interacts with ZNF488. Expressed in the brain, in oligodendrocytes. Strongly expressed in oligodendrogliomas, while expression is weak to moderate in astrocytomas. Expression in glioblastomas highly variable.

It is found in the nucleus. The protein localises to the cytoplasm. Its function is as follows. Required for oligodendrocyte and motor neuron specification in the spinal cord, as well as for the development of somatic motor neurons in the hindbrain. Functions together with ZNF488 to promote oligodendrocyte differentiation. Cooperates with OLIG1 to establish the pMN domain of the embryonic neural tube. Antagonist of V2 interneuron and of NKX2-2-induced V3 interneuron development. The sequence is that of Oligodendrocyte transcription factor 2 (OLIG2) from Homo sapiens (Human).